Consider the following 115-residue polypeptide: U3-lycotoxin-Ls1e (115 aa).

An N-terminal signal peptide occupies residues 1–20 (MKFVLLFGVLSLTLFSYSSA). Residues 21 to 44 (EMLDDFDQADEDELLSLIEKEEAR) constitute a propeptide that is removed on maturation. 4 disulfide bridges follow: cysteine 48–cysteine 63, cysteine 55–cysteine 72, cysteine 62–cysteine 87, and cysteine 74–cysteine 85.

Belongs to the neurotoxin 19 (CSTX) family. 01 subfamily. As to expression, expressed by the venom gland.

It localises to the secreted. The protein is U3-lycotoxin-Ls1e of Lycosa singoriensis (Wolf spider).